The following is a 319-amino-acid chain: NADH-ubiquinone oxidoreductase chain 1 (319 aa).

8 helical membrane passes run 5-25 (TINS…LTLM), 72-92 (LLIS…TPIP), 102-122 (LGLL…LWAG), 146-166 (VTLG…TMQL), 173-193 (FTWL…STLA), 225-245 (FFLT…ILFI), 254-274 (ELFL…FLWI), and 295-315 (LPLT…TSGI).

The protein belongs to the complex I subunit 1 family.

It localises to the mitochondrion inner membrane. It carries out the reaction a ubiquinone + NADH + 5 H(+)(in) = a ubiquinol + NAD(+) + 4 H(+)(out). Its function is as follows. Core subunit of the mitochondrial membrane respiratory chain NADH dehydrogenase (Complex I) that is believed to belong to the minimal assembly required for catalysis. Complex I functions in the transfer of electrons from NADH to the respiratory chain. The immediate electron acceptor for the enzyme is believed to be ubiquinone. The sequence is that of NADH-ubiquinone oxidoreductase chain 1 (MT-ND1) from Varanus flavescens (Yellow monitor).